The chain runs to 124 residues: Apolipoprotein C-IV (124 aa).

The first 27 residues, 1–27 (MLLPRRGLRTLPSLCLYILVLVWVVAC), serve as a signal peptide directing secretion.

It belongs to the apolipoprotein C4 family. Glycosylated; contains sialic acid. Present in up to five sialylated isoforms. In terms of tissue distribution, blood plasma, associated primarily with VLDL and HDL. Expressed mainly in the liver.

The protein resides in the secreted. Functionally, may participate in lipoprotein metabolism. The polypeptide is Apolipoprotein C-IV (APOC4) (Oryctolagus cuniculus (Rabbit)).